The primary structure comprises 561 residues: Malate synthase, glyoxysomal (561 aa).

The active-site Proton acceptor is the R177. Catalysis depends on D462, which acts as the Proton donor. The Microbody targeting signal motif lies at 559 to 561 (SRL).

This sequence belongs to the malate synthase family.

The protein resides in the glyoxysome. The enzyme catalyses glyoxylate + acetyl-CoA + H2O = (S)-malate + CoA + H(+). It participates in carbohydrate metabolism; glyoxylate cycle; (S)-malate from isocitrate: step 2/2. The protein is Malate synthase, glyoxysomal of Brassica napus (Rape).